We begin with the raw amino-acid sequence, 255 residues long: Hydroxyacylglutathione hydrolase (255 aa).

His-56, His-58, Asp-60, His-61, His-114, Asp-133, and His-171 together coordinate Zn(2+).

It belongs to the metallo-beta-lactamase superfamily. Glyoxalase II family. Monomer. Requires Zn(2+) as cofactor.

It carries out the reaction an S-(2-hydroxyacyl)glutathione + H2O = a 2-hydroxy carboxylate + glutathione + H(+). Its pathway is secondary metabolite metabolism; methylglyoxal degradation; (R)-lactate from methylglyoxal: step 2/2. Its function is as follows. Thiolesterase that catalyzes the hydrolysis of S-D-lactoyl-glutathione to form glutathione and D-lactic acid. This is Hydroxyacylglutathione hydrolase from Bradyrhizobium sp. (strain ORS 278).